We begin with the raw amino-acid sequence, 273 residues long: Aquaporin NIP1-4 (273 aa).

Helical transmembrane passes span 59-79 (LLAE…AITV) and 86-106 (VTFP…VYAV). The NPA 1 motif lies at 115-117 (NPA). A run of 3 helical transmembrane segments spans residues 133–155 (APAY…RLMF), 174–194 (SLVI…AVAT), and 198–218 (AVGH…VLFA). An NPA 2 motif is present at residues 227–229 (NPA). The helical transmembrane segment at 245–265 (WVYILGPFAGAAAGAWAYSLI) threads the bilayer.

This sequence belongs to the MIP/aquaporin (TC 1.A.8) family. NIP (TC 1.A.8.12) subfamily. As to expression, expressed in leaves.

The protein resides in the membrane. Aquaporins facilitate the transport of water and small neutral solutes across cell membranes. The chain is Aquaporin NIP1-4 (NIP1-4) from Oryza sativa subsp. japonica (Rice).